Reading from the N-terminus, the 80-residue chain is Dolichol-phosphate mannose synthase subunit 2 (80 aa).

2 helical membrane passes run 10–30 (LLLSSISLSIFTYYTFWVIIL) and 50–70 (ILVPVFAGIALLSLISVFIGM).

It belongs to the DPM2 family. Component of the dolichol-phosphate mannose (DPM) synthase complex composed of DPMS1, DPMS2 and DPMS3; in the complex interacts directly with DPMS3. Associates with the GPI-GlcNAc transferase (GPI-GnT) complex.

The protein resides in the endoplasmic reticulum membrane. Its pathway is protein modification; protein glycosylation. Functionally, regulates the biosynthesis of dolichol phosphate-mannose. Regulatory subunit of the dolichol-phosphate mannose (DPM) synthase complex; essential for the ER localization and stable expression of DPMS1. The chain is Dolichol-phosphate mannose synthase subunit 2 from Arabidopsis thaliana (Mouse-ear cress).